The primary structure comprises 500 residues: UDP-N-acetylmuramoyl-L-alanyl-D-glutamate--2,6-diaminopimelate ligase (500 aa).

Serine 38 provides a ligand contact to UDP-N-acetyl-alpha-D-muramoyl-L-alanyl-D-glutamate. Residue 118–124 (GTNGKTS) coordinates ATP. Residues 160-161 (TT), serine 187, and arginine 195 contribute to the UDP-N-acetyl-alpha-D-muramoyl-L-alanyl-D-glutamate site. N6-carboxylysine is present on lysine 227. Meso-2,6-diaminopimelate-binding positions include arginine 395, 419–422 (DNPR), glycine 471, and glutamate 475. The Meso-diaminopimelate recognition motif signature appears at 419–422 (DNPR).

The protein belongs to the MurCDEF family. MurE subfamily. Mg(2+) serves as cofactor. Carboxylation is probably crucial for Mg(2+) binding and, consequently, for the gamma-phosphate positioning of ATP.

It is found in the cytoplasm. The catalysed reaction is UDP-N-acetyl-alpha-D-muramoyl-L-alanyl-D-glutamate + meso-2,6-diaminopimelate + ATP = UDP-N-acetyl-alpha-D-muramoyl-L-alanyl-gamma-D-glutamyl-meso-2,6-diaminopimelate + ADP + phosphate + H(+). It functions in the pathway cell wall biogenesis; peptidoglycan biosynthesis. Its function is as follows. Catalyzes the addition of meso-diaminopimelic acid to the nucleotide precursor UDP-N-acetylmuramoyl-L-alanyl-D-glutamate (UMAG) in the biosynthesis of bacterial cell-wall peptidoglycan. The chain is UDP-N-acetylmuramoyl-L-alanyl-D-glutamate--2,6-diaminopimelate ligase from Leptospira borgpetersenii serovar Hardjo-bovis (strain L550).